We begin with the raw amino-acid sequence, 118 residues long: Small ribosomal subunit protein uS13 (118 aa).

Residues 94–118 are disordered; the sequence is SLPLRGQRTKTNARTRKGPRKPIKK.

The protein belongs to the universal ribosomal protein uS13 family. Part of the 30S ribosomal subunit. Forms a loose heterodimer with protein S19. Forms two bridges to the 50S subunit in the 70S ribosome.

Located at the top of the head of the 30S subunit, it contacts several helices of the 16S rRNA. In the 70S ribosome it contacts the 23S rRNA (bridge B1a) and protein L5 of the 50S subunit (bridge B1b), connecting the 2 subunits; these bridges are implicated in subunit movement. Contacts the tRNAs in the A and P-sites. This Shewanella amazonensis (strain ATCC BAA-1098 / SB2B) protein is Small ribosomal subunit protein uS13.